Reading from the N-terminus, the 611-residue chain is Dihydroxy-acid dehydratase (611 aa).

Asp81 contributes to the Mg(2+) binding site. Position 122 (Cys122) interacts with [2Fe-2S] cluster. Mg(2+)-binding residues include Asp123 and Lys124. The residue at position 124 (Lys124) is an N6-carboxylysine. Cys195 provides a ligand contact to [2Fe-2S] cluster. Glu491 is a Mg(2+) binding site. Ser517 functions as the Proton acceptor in the catalytic mechanism.

Belongs to the IlvD/Edd family. As to quaternary structure, homodimer. The cofactor is [2Fe-2S] cluster. Requires Mg(2+) as cofactor.

The enzyme catalyses (2R)-2,3-dihydroxy-3-methylbutanoate = 3-methyl-2-oxobutanoate + H2O. It carries out the reaction (2R,3R)-2,3-dihydroxy-3-methylpentanoate = (S)-3-methyl-2-oxopentanoate + H2O. The protein operates within amino-acid biosynthesis; L-isoleucine biosynthesis; L-isoleucine from 2-oxobutanoate: step 3/4. It functions in the pathway amino-acid biosynthesis; L-valine biosynthesis; L-valine from pyruvate: step 3/4. In terms of biological role, functions in the biosynthesis of branched-chain amino acids. Catalyzes the dehydration of (2R,3R)-2,3-dihydroxy-3-methylpentanoate (2,3-dihydroxy-3-methylvalerate) into 2-oxo-3-methylpentanoate (2-oxo-3-methylvalerate) and of (2R)-2,3-dihydroxy-3-methylbutanoate (2,3-dihydroxyisovalerate) into 2-oxo-3-methylbutanoate (2-oxoisovalerate), the penultimate precursor to L-isoleucine and L-valine, respectively. The protein is Dihydroxy-acid dehydratase of Histophilus somni (strain 129Pt) (Haemophilus somnus).